Here is a 449-residue protein sequence, read N- to C-terminus: Allantoinase (449 aa).

Positions 59, 61, 146, 182, 238, and 311 each coordinate Zn(2+). Lys-146 carries the N6-carboxylysine modification.

It belongs to the metallo-dependent hydrolases superfamily. Allantoinase family. In terms of assembly, homotetramer. Zn(2+) is required as a cofactor. Post-translationally, carboxylation allows a single lysine to coordinate two zinc ions.

The catalysed reaction is (S)-allantoin + H2O = allantoate + H(+). Its pathway is nitrogen metabolism; (S)-allantoin degradation; allantoate from (S)-allantoin: step 1/1. Functionally, catalyzes the conversion of allantoin (5-ureidohydantoin) to allantoic acid by hydrolytic cleavage of the five-member hydantoin ring. This chain is Allantoinase, found in Deinococcus geothermalis (strain DSM 11300 / CIP 105573 / AG-3a).